The sequence spans 858 residues: MSQDPFALLKAEVDLLGRLLGEAIRTLSGERFFALVEEVRALAKARRQGDEAAGEALLARVEGLSTEEAEALVRAFTHYFHLVNLAEERHRVRVNRLRAQAETLESPRPEGFLALAKALKERGLSLEEAEAHLNRLELLLTFTAHPTETRRRTLRHHLEALQRELEAGDRERLAARVALLYGTEEVRKARPTVEDEIKGGLYYLPTTLWEAVPRVVAGLEAALERVYGRRPRLKSPVRFRSWIGGDRDGNPFVTPEVTAFAGRYAREVARRRFLEALEDLVRDLSLAEARVPVPREVRERGEGVERFMGEPYRRYFAALYRALEREEATTEGLLAALKAAERGLREVGLGRVAEAFLDPLEARLSAFGLELAPLDLREESGRLLEAAAELLRVGGVHPDFLALPQEERERLLTEELKTARPLLPVGEAPEGEALRVALGALKAWRDKGAHVVSMTHHPEDLLAVFLLAREVGLYRPGRPLPFDVVPLFETLEDLRRAPGVLRRLLENPVFLAHARGRGGVEVMIGYSDSNKDAGFLMANLALYEAQEALSRVGEEVGLPVYFFHGRGTSTARGGGPAGRAIASLPPRSVGRRIRLTEQGEALADRYSHPDLAVRHLEQMLYHFALAALGPGQEPEARWREALAQAAEESTRRYRALLQEEGFFDFFEAFTPIREIGELPIASRPVYRRGRVRDIRDLRAIPWVMAWTQVRVLLPGWYGLSALEELPLDLLREMYRGWPFFASTLEAAAMALAKADMGVARLYLRLVPEPLRFFYRRLAEEHARTVALLEAVFQAPLLHNQRTLERQIRLRNPYVDPINIVQVELLRRYRAPGGKEDEALRRALLLSILGVAAGLRNAG.

Residues His145 and Lys531 contribute to the active site.

It belongs to the PEPCase type 1 family. It depends on Mg(2+) as a cofactor.

The catalysed reaction is oxaloacetate + phosphate = phosphoenolpyruvate + hydrogencarbonate. Functionally, forms oxaloacetate, a four-carbon dicarboxylic acid source for the tricarboxylic acid cycle. The polypeptide is Phosphoenolpyruvate carboxylase (Thermus thermophilus (strain ATCC BAA-163 / DSM 7039 / HB27)).